Reading from the N-terminus, the 356-residue chain is Alanine racemase (356 aa).

K35 acts as the Proton acceptor; specific for D-alanine in catalysis. K35 bears the N6-(pyridoxal phosphate)lysine mark. Position 130 (R130) interacts with substrate. Y253 (proton acceptor; specific for L-alanine) is an active-site residue. Substrate is bound at residue M301.

The protein belongs to the alanine racemase family. It depends on pyridoxal 5'-phosphate as a cofactor.

The catalysed reaction is L-alanine = D-alanine. It functions in the pathway amino-acid biosynthesis; D-alanine biosynthesis; D-alanine from L-alanine: step 1/1. Catalyzes the interconversion of L-alanine and D-alanine. May also act on other amino acids. The sequence is that of Alanine racemase (alr) from Sodalis glossinidius (strain morsitans).